The primary structure comprises 932 residues: Protocadherin gamma-A6 (932 aa).

The N-terminal stretch at 1-29 (MAPPQRHPQRSEQVLLLTLLGTLWGAAAA) is a signal peptide. Cadherin domains are found at residues 30-133 (QIRY…TPRF), 134-242 (LKEE…TPVF), 243-347 (TQPV…VPEV), 348-452 (VVTS…PPTF), 453-562 (PHSS…APEI), and 570-682 (DGST…EPSA). Residues 30–692 (QIRYSIPEEL…KPNDSDLTLY (663 aa)) lie on the Extracellular side of the membrane. N81 carries N-linked (GlcNAc...) asparagine glycosylation. N-linked (GlcNAc...) asparagine glycosylation is found at N419 and N545. The N-linked (GlcNAc...) asparagine glycan is linked to N685. A helical transmembrane segment spans residues 693-713 (LVVAVAAVSCVFLAFVIVLLA). The Cytoplasmic portion of the chain corresponds to 714–932 (LRLQRWHKSR…KKKSGKKEKK (219 aa)). 2 disordered regions span residues 803 to 841 (DPRQLQQAPPNTDWRFSQAQRPGTSGSQNGDDTGTWPNN) and 902 to 932 (ATLTNAAGKRDGKAPAGGNGNKKKSGKKEKK). Residues 806 to 841 (QLQQAPPNTDWRFSQAQRPGTSGSQNGDDTGTWPNN) show a composition bias toward polar residues. Residues 922-932 (NKKKSGKKEKK) show a composition bias toward basic residues.

It is found in the cell membrane. In terms of biological role, potential calcium-dependent cell-adhesion protein. May be involved in the establishment and maintenance of specific neuronal connections in the brain. This chain is Protocadherin gamma-A6 (PCDHGA6), found in Pan troglodytes (Chimpanzee).